The sequence spans 519 residues: MSTFVKVTDLITIMFFLAIAAVITASNTAELDVLEMARTAVVEAKTSFGSMAVTEATSEVAGSYYKLGLSECEKLYDESEARLSKLVVDHENFTVEDVRTWLSGVLANHHTCLDGLIQQRQGHKPLVHSNVTFVLHEALAFYKKSRGHMKKRLHGPARQGHGPTRPKHRPTRPNHGPGRSHHGPSRPNQNGGMLVSWNPTSSRADFVVARDGSATHRTINQALAAVSRMGKSRLNRVIIYIKAGVYNEKIEIDRHMKNIMLVGDGMDRTIVTNNRNVPDGSTTYGSATFGVSGDGFWARDITFENTAGPHKHQAVALRVSSDLSLFYRCSFKGYQDTLFTHSLRQFYRDCHIYGTIDFIFGDAAAVFQNCDIFVRRPMDHQGNMITAQGRDDPHTNSGISIQHSRIRAAPEFEAVKGRFKSYLGRPWKKYSRTVFLKTDIDELIDPRGWREWSGSYALSTLYYGEFMNTGAGAGTGRRVNWPGFHVLRGEEEASPFTVSRFIQGDSWIPITGVPFSAGV.

Residues 1–25 form the signal peptide; it reads MSTFVKVTDLITIMFFLAIAAVITA. The pectinesterase inhibitor 36 stretch occupies residues 27–141; it reads NTAELDVLEM…TFVLHEALAF (115 aa). N92 and N130 each carry an N-linked (GlcNAc...) asparagine glycan. The tract at residues 147 to 196 is disordered; sequence GHMKKRLHGPARQGHGPTRPKHRPTRPNHGPGRSHHGPSRPNQNGGMLVS. Positions 164-184 are enriched in basic residues; sequence TRPKHRPTRPNHGPGRSHHGP. Residues 186–196 show a composition bias toward polar residues; that stretch reads RPNQNGGMLVS. Residues 205 to 505 form a pectinesterase 36 region; it reads DFVVARDGSA…FTVSRFIQGD (301 aa). Residues T283 and Q313 each contribute to the substrate site. The Proton donor; for pectinesterase activity role is filled by D336. The Nucleophile; for pectinesterase activity role is filled by D357. Substrate is bound by residues R425 and W427.

The protein in the N-terminal section; belongs to the PMEI family. It in the C-terminal section; belongs to the pectinesterase family. Expressed in siliques.

Its subcellular location is the secreted. The protein resides in the cell wall. The enzyme catalyses [(1-&gt;4)-alpha-D-galacturonosyl methyl ester](n) + n H2O = [(1-&gt;4)-alpha-D-galacturonosyl](n) + n methanol + n H(+). It functions in the pathway glycan metabolism; pectin degradation; 2-dehydro-3-deoxy-D-gluconate from pectin: step 1/5. In terms of biological role, acts in the modification of cell walls via demethylesterification of cell wall pectin. This is Probable pectinesterase/pectinesterase inhibitor 36 (PME36) from Arabidopsis thaliana (Mouse-ear cress).